The sequence spans 851 residues: DNA mismatch repair protein MutS (851 aa).

614–621 (GPNMGGKS) contacts ATP.

Belongs to the DNA mismatch repair MutS family.

Functionally, this protein is involved in the repair of mismatches in DNA. It is possible that it carries out the mismatch recognition step. This protein has a weak ATPase activity. The polypeptide is DNA mismatch repair protein MutS (Serratia proteamaculans (strain 568)).